A 235-amino-acid polypeptide reads, in one-letter code: TVP38/TMEM64 family inner membrane protein YdjZ (235 aa).

At 1–13 the chain is on the periplasmic side; sequence MMMMQSRKIWYYR. The chain crosses the membrane as a helical span at residues 14 to 34; it reads ITLIILLFAMLLAWALLPGVH. Residues 35 to 64 are Cytoplasmic-facing; sequence EFINRSVAAFAAVDQQGIERFIQSYGALAA. A helical membrane pass occupies residues 65–85; that stretch reads VVSFLLMILQAIAAPLPAFLI. Over 86–95 the chain is Periplasmic; the sequence is TFANASLFGA. Residues 90-199 are VTT domain; sequence ASLFGAFWGG…IVYSWAGSML (110 aa). A helical membrane pass occupies residues 96-116; that stretch reads FWGGLLSWTSSMAGAALCFFI. Residues 117–176 are Cytoplasmic-facing; the sequence is ARVMGREVVEKLTGKTVLDSMDGFFTRYGKHTILVCRLLPFVPFDPISYAAGLTSIRFRS. A helical membrane pass occupies residues 177–197; sequence FFIATGLGQLPATIVYSWAGS. The Periplasmic segment spans residues 198–202; the sequence is MLTGG. A helical membrane pass occupies residues 203–223; the sequence is TFWFVTGLFILFALTVVIFMA. Residues 224–235 are Cytoplasmic-facing; sequence KKIWLERQKRNA.

This sequence belongs to the TVP38/TMEM64 family.

The protein resides in the cell inner membrane. This Escherichia coli (strain K12) protein is TVP38/TMEM64 family inner membrane protein YdjZ (ydjZ).